Here is a 311-residue protein sequence, read N- to C-terminus: Ribonuclease HIII (311 aa).

An RNase H type-2 domain is found at 95-311 (MSIVGSDEVG…NTEKALRLLR (217 aa)). A divalent metal cation is bound by residues D101, E102, and D206.

The protein belongs to the RNase HII family. RnhC subfamily. It depends on Mn(2+) as a cofactor. Mg(2+) serves as cofactor.

The protein resides in the cytoplasm. It catalyses the reaction Endonucleolytic cleavage to 5'-phosphomonoester.. Endonuclease that specifically degrades the RNA of RNA-DNA hybrids. This Bacillus cereus (strain ATCC 14579 / DSM 31 / CCUG 7414 / JCM 2152 / NBRC 15305 / NCIMB 9373 / NCTC 2599 / NRRL B-3711) protein is Ribonuclease HIII.